Reading from the N-terminus, the 88-residue chain is Homeobox protein knotted-1-like 3 (88 aa).

Residues 4–24 form the ELK domain; that stretch reads ELKKQLLRKYSGCLGNLRKEL. Residues 25–88 constitute a DNA-binding region (homeobox; TALE-type); that stretch reads CKKRKKDKLP…NQRKRHWKPS (64 aa).

Belongs to the TALE/KNOX homeobox family. As to expression, strongly expressed in ear inflorescence primordia and shoot meristem. Weakly expressed in embryos. Absent from leaves.

It localises to the nucleus. Its function is as follows. Probably binds to the DNA sequence 5'-TGAC-3'. The sequence is that of Homeobox protein knotted-1-like 3 (KNOX3) from Zea mays (Maize).